We begin with the raw amino-acid sequence, 232 residues long: Clarin-1 (232 aa).

The chain crosses the membrane as a helical span at residues 8 to 28 (IIFCMAGVFSFACALGVVTAL). Residue Asn-48 is glycosylated (N-linked (GlcNAc...) asparagine). 2 helical membrane passes run 101 to 121 (IILF…FFMY) and 135 to 155 (LGLY…MILF). The N-linked (GlcNAc...) asparagine glycan is linked to Asn-184. Residues 186 to 206 (TTSFWVVFICFFVHFLNGLLI) form a helical membrane-spanning segment.

The protein belongs to the clarin family.

The protein resides in the cell membrane. Functionally, may have a role in the excitatory ribbon synapse junctions between hair cells and cochlear ganglion cells and presumably also in analogous synapses within the retina. In Rattus norvegicus (Rat), this protein is Clarin-1 (Clrn1).